We begin with the raw amino-acid sequence, 872 residues long: Alanine--tRNA ligase (872 aa).

His561, His565, Cys662, and His666 together coordinate Zn(2+).

The protein belongs to the class-II aminoacyl-tRNA synthetase family. Zn(2+) serves as cofactor.

The protein resides in the cytoplasm. The enzyme catalyses tRNA(Ala) + L-alanine + ATP = L-alanyl-tRNA(Ala) + AMP + diphosphate. In terms of biological role, catalyzes the attachment of alanine to tRNA(Ala) in a two-step reaction: alanine is first activated by ATP to form Ala-AMP and then transferred to the acceptor end of tRNA(Ala). Also edits incorrectly charged Ser-tRNA(Ala) and Gly-tRNA(Ala) via its editing domain. In Thiobacillus denitrificans (strain ATCC 25259 / T1), this protein is Alanine--tRNA ligase.